Here is a 423-residue protein sequence, read N- to C-terminus: MRKSVCPKQKFFFSAFPFFFFFCVFPLISRTGQEKLLFDQKYKIIKGEKKEKKKNQRANRREHQQKREIMRFKKSFTCIDMHTEGEAARIVTSGLPHIPGSNMAEKKAYLQENMDYLRRGIMLEPRGHDDMFGAFLFDPIEEGADLGMVFMDTGGYLNMCGHNSIAAVTAAVETGIVSVPAKATNVPVVLDTPAGLVRGTAHLQSGTESEVSNASIINVPSFLYQQDVVVVLPKPYGEVRVDIAFGGNFFAIVPAEQLGIDISVQNLSRLQEAGELLRTEINRSVKVQHPQLPHINTVDCVEIYGPPTNPEANYKNVVIFGNRQADRSPCGTGTSAKMATLYAKGQLRIGETFVYESILGSLFQGRVLGEERIPGVKVPVTKDAEEGMLVVTAEITGKAFIMGFNTMLFDPTDPFKNGFTLKQ.

A signal peptide spans 1-31 (MRKSVCPKQKFFFSAFPFFFFFCVFPLISRT). Cys160 serves as the catalytic Proton acceptor. 161-162 (GH) contacts substrate. N-linked (GlcNAc...) asparagine glycans are attached at residues Asn213, Asn266, and Asn282. Residue Asp326 participates in substrate binding. Cys330 serves as the catalytic Proton donor. Position 331-332 (331-332 (GT)) interacts with substrate.

This sequence belongs to the proline racemase family. Homodimer.

It is found in the secreted. It localises to the membrane. The protein localises to the cytoplasm. It carries out the reaction L-proline = D-proline. Its activity is regulated as follows. Inhibited by maleic acid, iodoacetamide, iodoacetate and, most particularly, pyrrole-2-carboxylic acid. In terms of biological role, catalyzes the interconversion of L- and D-proline. Secreted isoform 1 contributes to parasite immune evasion by acting as a B-cell mitogen. Probably involved in parasite differentiation and infectivity. This chain is Proline racemase A (PA45-A), found in Trypanosoma cruzi (strain CL Brener).